Consider the following 242-residue polypeptide: Probable transcriptional regulatory protein PXO_01555 (242 aa).

The protein belongs to the TACO1 family.

It is found in the cytoplasm. The chain is Probable transcriptional regulatory protein PXO_01555 from Xanthomonas oryzae pv. oryzae (strain PXO99A).